The chain runs to 337 residues: MDKPRILSGVQPTGNLHLGNYLGAIRSWVEQQQHYDNFFCVVDLHAITVPHNPQTLAQDTLTIAALYLACGIDLQYSTIFVQSHVAAHSELAWLLNCVTPLNWLERMIQFKEKAVKQGENVSVGLLDYPVLMAADILLYDADKVPVGEDQKQHLELTRDIVIRINDKFGREDAPVLKLPEPLIRKEGARVMSLADGTKKMSKSDESELSRINLLDPPEMIKKKVKKCKTDPQRGLWFDDPERPECHNLLTLYTLLSNQTKEAVAQECAEMGWGQFKPLLTETAIAALEPIQAKYAEILADRGELDRIIQAGNAKASQTAQQTLARVRDALGFLAPPY.

ATP contacts are provided by residues 11-13 and 19-20; these read QPT and GN. Positions 12 to 20 match the 'HIGH' region motif; it reads PTGNLHLGN. D135 contributes to the L-tryptophan binding site. ATP is bound by residues 147–149, V190, and 199–203; these read GED and KMSKS. Residues 199–203 carry the 'KMSKS' region motif; that stretch reads KMSKS.

It belongs to the class-I aminoacyl-tRNA synthetase family. In terms of assembly, homodimer.

It localises to the cytoplasm. The catalysed reaction is tRNA(Trp) + L-tryptophan + ATP = L-tryptophyl-tRNA(Trp) + AMP + diphosphate + H(+). Catalyzes the attachment of tryptophan to tRNA(Trp). The protein is Tryptophan--tRNA ligase of Synechocystis sp. (strain ATCC 27184 / PCC 6803 / Kazusa).